Consider the following 99-residue polypeptide: DNA/RNA-binding protein Alba 1 (99 aa).

An N6-acetyllysine modification is found at K17.

Belongs to the histone-like Alba family. Post-translationally, acetylated. Acetylation at Lys-17 decreases DNA-binding affinity.

The protein localises to the cytoplasm. It is found in the chromosome. Functionally, binds double-stranded DNA tightly but without sequence specificity. Involved in DNA compaction. This chain is DNA/RNA-binding protein Alba 1, found in Sulfurisphaera tokodaii (strain DSM 16993 / JCM 10545 / NBRC 100140 / 7) (Sulfolobus tokodaii).